The sequence spans 178 residues: Cell division protein SepF (178 aa).

Basic and acidic residues predominate over residues 21–46 (YESEQSVATHHDEERPQAQEREERRA). Positions 21-65 (YESEQSVATHHDEERPQAQEREERRAPAPVREVVREMPTVDAEEE) are disordered.

The protein belongs to the SepF family. Homodimer. Interacts with FtsZ.

It is found in the cytoplasm. In terms of biological role, cell division protein that is part of the divisome complex and is recruited early to the Z-ring. Probably stimulates Z-ring formation, perhaps through the cross-linking of FtsZ protofilaments. Its function overlaps with FtsA. This Paenarthrobacter aurescens (strain TC1) protein is Cell division protein SepF.